The primary structure comprises 95 residues: Small ribosomal subunit protein bS6 (95 aa).

The protein belongs to the bacterial ribosomal protein bS6 family.

Functionally, binds together with bS18 to 16S ribosomal RNA. This Corynebacterium diphtheriae (strain ATCC 700971 / NCTC 13129 / Biotype gravis) protein is Small ribosomal subunit protein bS6.